The chain runs to 236 residues: 3-oxoacyl-[acyl-carrier-protein] reductase (236 aa).

Methionine 1 is subject to N-acetylmethionine. NADP(+) is bound by residues 11 to 14 (SRGI) and 34 to 35 (RN). Lysine 40 carries the N6-acetyllysine modification. 83-85 (AAG) lines the NADP(+) pocket. The residue at position 96 (lysine 96) is an N6-acetyllysine. Residue serine 134 coordinates substrate. Residues tyrosine 147, lysine 151, and 180–182 (IHT) contribute to the NADP(+) site. Tyrosine 147 functions as the Proton acceptor in the catalytic mechanism. Lysine 194 is subject to N6-acetyllysine.

Belongs to the short-chain dehydrogenases/reductases (SDR) family. Homotetramer (in vitro). Heterotetramer with HSD17B8; contains two molecules each of HSD17B8 and CBR4. Does not form homotetramers when HSD17B8 is coexpressed, only heterotetramers (in vitro).

Its subcellular location is the mitochondrion matrix. It catalyses the reaction a (3R)-hydroxyacyl-[ACP] + NADP(+) = a 3-oxoacyl-[ACP] + NADPH + H(+). The enzyme catalyses a quinone + NADPH + H(+) = a quinol + NADP(+). The protein operates within lipid metabolism; fatty acid biosynthesis. Its function is as follows. Component of the heterotetramer complex KAR (3-ketoacyl-[acyl carrier protein] reductase or 3-ketoacyl-[ACP] reductase) that forms part of the mitochondrial fatty acid synthase (mtFAS). Beta-subunit of the KAR heterotetramer complex, responsible for the 3-ketoacyl-ACP reductase activity of the mtFAS, reduces 3-oxoacyl-[ACP] to (3R)-hydroxyacyl-[ACP] in a NADPH-dependent manner with no chain length preference, thereby participating in mitochondrial fatty acid biosynthesis. The homotetramer has NADPH-dependent quinone reductase activity (in vitro), hence could play a role in protection against cytotoxicity of exogenous quinones. As a heterotetramer, it can also reduce 9,10-phenanthrenequinone, 1,4-benzoquinone and various other o-quinones and p-quinones (in vitro). The polypeptide is 3-oxoacyl-[acyl-carrier-protein] reductase (Cbr4) (Rattus norvegicus (Rat)).